A 350-amino-acid polypeptide reads, in one-letter code: 3-dehydroquinate synthase (350 aa).

Residues 106 to 110 (GVIGD), 130 to 131 (TS), Lys-143, and Lys-152 contribute to the NAD(+) site. 3 residues coordinate Zn(2+): Glu-185, His-246, and His-263.

It belongs to the sugar phosphate cyclases superfamily. Dehydroquinate synthase family. Co(2+) is required as a cofactor. Requires Zn(2+) as cofactor. It depends on NAD(+) as a cofactor.

It is found in the cytoplasm. It carries out the reaction 7-phospho-2-dehydro-3-deoxy-D-arabino-heptonate = 3-dehydroquinate + phosphate. Its pathway is metabolic intermediate biosynthesis; chorismate biosynthesis; chorismate from D-erythrose 4-phosphate and phosphoenolpyruvate: step 2/7. Catalyzes the conversion of 3-deoxy-D-arabino-heptulosonate 7-phosphate (DAHP) to dehydroquinate (DHQ). This Clostridium beijerinckii (strain ATCC 51743 / NCIMB 8052) (Clostridium acetobutylicum) protein is 3-dehydroquinate synthase.